A 408-amino-acid chain; its full sequence is uncharacterized protein (408 aa).

A run of 12 helical transmembrane segments spans residues 9 to 29 (WFVL…RNSF), 49 to 69 (VSVS…GFFI), 77 to 97 (IMAL…YSPN), 100 to 120 (VFSA…VGVT), 135 to 155 (LALA…SPIW), 167 to 187 (TYTI…VFGM), 216 to 236 (LIHI…IIDA), 252 to 272 (GMMA…GWLS), 283 to 303 (SILF…ILGI), 308 to 328 (LWYF…IPLT), 340 to 360 (LIGS…ALSV), and 373 to 393 (YLLI…IELV).

It belongs to the major facilitator superfamily.

It is found in the cell membrane. This is an uncharacterized protein from Bacillus subtilis (strain 168).